The chain runs to 295 residues: Ethanolamine ammonia-lyase small subunit (295 aa).

Valine 207, glutamate 228, and cysteine 258 together coordinate adenosylcob(III)alamin.

The protein belongs to the EutC family. In terms of assembly, the basic unit is a heterodimer which dimerizes to form tetramers. The heterotetramers trimerize; 6 large subunits form a core ring with 6 small subunits projecting outwards. Adenosylcob(III)alamin is required as a cofactor.

Its subcellular location is the bacterial microcompartment. The enzyme catalyses ethanolamine = acetaldehyde + NH4(+). The protein operates within amine and polyamine degradation; ethanolamine degradation. Functionally, catalyzes the deamination of various vicinal amino-alcohols to oxo compounds. Allows this organism to utilize ethanolamine as the sole source of nitrogen and carbon in the presence of external vitamin B12. The polypeptide is Ethanolamine ammonia-lyase small subunit (Escherichia coli (strain UTI89 / UPEC)).